Consider the following 399-residue polypeptide: MAREKFERNKPHVNIGTIGHVDHGKTTLTAAITNVLAKKGQAQAQDYGDIDGAPEERERGITINTAHVEYETDGRHYAHVDCPGHADYVKNMITGAAQMDGAILVCAATDGPMAQTKEHILLAKQVGVPALVVALNKCDMVDDPEIIELVEMEIRELLDSYDFPGDEIPIVQVSGLKALEGDSEWEGKVEELMKAVDASIPEPEREVDKPFLMAVEDVFSITGRGTVATGRIERGKVTVGEEVEIVGIRDTRLTTVTGVEMFRKLLDEGMAGDNVGLLLRGIQKEDIERGMVLVKKGSITPHTQFEGEVYVLKKEEGGRHTPFFAGYRPQFYIRTTDVTGQITAFTADDGSSVEMVMPGDRIKMTGELICPVAIEQGMRFAIREGGRTIGAGVVSKIIK.

A tr-type G domain is found at 10 to 204; it reads KPHVNIGTIG…AVDASIPEPE (195 aa). The G1 stretch occupies residues 19 to 26; it reads GHVDHGKT. 19–26 is a binding site for GTP; it reads GHVDHGKT. Residue T26 coordinates Mg(2+). A G2 region spans residues 60–64; the sequence is GITIN. A G3 region spans residues 81–84; that stretch reads DCPG. GTP is bound by residues 81 to 85 and 136 to 139; these read DCPGH and NKCD. Residues 136–139 form a G4 region; sequence NKCD. The G5 stretch occupies residues 174 to 176; that stretch reads SGL.

The protein belongs to the TRAFAC class translation factor GTPase superfamily. Classic translation factor GTPase family. EF-Tu/EF-1A subfamily. Monomer.

It localises to the cytoplasm. The enzyme catalyses GTP + H2O = GDP + phosphate + H(+). Functionally, GTP hydrolase that promotes the GTP-dependent binding of aminoacyl-tRNA to the A-site of ribosomes during protein biosynthesis. The sequence is that of Elongation factor Tu from Prochlorococcus marinus (strain SARG / CCMP1375 / SS120).